The primary structure comprises 215 residues: 3-isopropylmalate dehydratase small subunit (215 aa).

It belongs to the LeuD family. LeuD type 1 subfamily. In terms of assembly, heterodimer of LeuC and LeuD.

The enzyme catalyses (2R,3S)-3-isopropylmalate = (2S)-2-isopropylmalate. It participates in amino-acid biosynthesis; L-leucine biosynthesis; L-leucine from 3-methyl-2-oxobutanoate: step 2/4. Functionally, catalyzes the isomerization between 2-isopropylmalate and 3-isopropylmalate, via the formation of 2-isopropylmaleate. This chain is 3-isopropylmalate dehydratase small subunit, found in Marinobacter nauticus (strain ATCC 700491 / DSM 11845 / VT8) (Marinobacter aquaeolei).